The sequence spans 84 residues: Exodeoxyribonuclease 7 small subunit (84 aa).

Belongs to the XseB family. In terms of assembly, heterooligomer composed of large and small subunits.

It is found in the cytoplasm. It catalyses the reaction Exonucleolytic cleavage in either 5'- to 3'- or 3'- to 5'-direction to yield nucleoside 5'-phosphates.. Its function is as follows. Bidirectionally degrades single-stranded DNA into large acid-insoluble oligonucleotides, which are then degraded further into small acid-soluble oligonucleotides. The polypeptide is Exodeoxyribonuclease 7 small subunit (Bartonella bacilliformis (strain ATCC 35685 / KC583 / Herrer 020/F12,63)).